A 584-amino-acid polypeptide reads, in one-letter code: DNA mismatch repair protein MutL (584 aa).

The protein belongs to the DNA mismatch repair MutL/HexB family.

In terms of biological role, this protein is involved in the repair of mismatches in DNA. It is required for dam-dependent methyl-directed DNA mismatch repair. May act as a 'molecular matchmaker', a protein that promotes the formation of a stable complex between two or more DNA-binding proteins in an ATP-dependent manner without itself being part of a final effector complex. The sequence is that of DNA mismatch repair protein MutL from Buchnera aphidicola subsp. Acyrthosiphon pisum (strain Tuc7).